A 198-amino-acid chain; its full sequence is C4b-binding protein beta chain (198 aa).

A signal peptide spans 1-17; it reads MFFWLMCYLVDVWLISA. Residues 22 to 77 form the Sushi 1; atypical; lacks a Cys domain; the sequence is HCPDPLLVTDEFSSLEPVNVNDTFMFKCNEHCIFKGSNWSQCRENHTRVTHSPVSK. N-linked (GlcNAc...) asparagine glycosylation is found at Asn42, Asn59, and Asn66. Residues 79-135 enclose the Sushi 2 domain; sequence RDCGPPETPTHGYFEGRDFKSGSTITYYCEARYRLVGTQHQQCIDGEWTSAPPICEL. 2 cysteine pairs are disulfide-bonded: Cys81–Cys121 and Cys107–Cys133.

As to quaternary structure, disulfide-linked complex of alpha and beta chains.

Its subcellular location is the secreted. Controls the classical pathway of complement activation. It binds as a cofactor to C3b/C4b inactivator (C3bINA), which then hydrolyzes the complement fragment C4b. It also accelerates the degradation of the C4bC2a complex (C3 convertase) by dissociating the complement fragment C2a. It also interacts with serum amyloid P component. The polypeptide is C4b-binding protein beta chain (C4BPB) (Bos taurus (Bovine)).